Consider the following 309-residue polypeptide: MNTNTQTEQQIIREETRIDKIIKKRKKKMRAQVLLCPTITAYGRLYCAPRRLHRYNSSSSSSQFLNLNLSRFSGALFFHMEQFQSGTGSSGKRGMVENLKRYGVISSKRVAQVMEALDRGLFVPVGSSAYVDTPVPIGYNATISAPHMHATCLQLLEDKLHPGMRALDVGSGTGYLTGCFALMVGAEGRVVGVDHIPELVDMSIKNIEKSVAASFLKKGSLSLHVGDGRKGWQEFAPYDAIHVGAAASEIPQPLLDQLKPGGRMVIPLGTYFQELKVIDKNEDGSIKVHTETSVRYVPLTSRVEQLGGF.

A Nuclear localization signal motif is present at residues 23–28 (KKRKKK). S144 is a catalytic residue.

It belongs to the methyltransferase superfamily. L-isoaspartyl/D-aspartyl protein methyltransferase family. As to expression, expressed in rosette leaves, stems, cauline leaves, flowers and developing seeds.

Its subcellular location is the nucleus. It carries out the reaction [protein]-L-isoaspartate + S-adenosyl-L-methionine = [protein]-L-isoaspartate alpha-methyl ester + S-adenosyl-L-homocysteine. Catalyzes the methyl esterification of L-isoaspartyl residues in peptides and proteins that result from spontaneous decomposition of normal L-aspartyl and L-asparaginyl residues. It plays a role in the repair and/or degradation of damaged proteins. The protein is Protein-L-isoaspartate O-methyltransferase 2 (PIMT2) of Arabidopsis thaliana (Mouse-ear cress).